Here is a 137-residue protein sequence, read N- to C-terminus: Probable disulfide formation protein C (137 aa).

A helical transmembrane segment spans residues 6 to 25 (ENLMLGSWLTALTAMLGSLY). Cys35 and Cys38 are joined by a disulfide. A run of 2 helical transmembrane segments spans residues 40-59 (YQRIIMYPLVLILFIGYLKR) and 66-83 (YSLWFSLIGMFTSLYHYS). Cys97 and Cys102 form a disulfide bridge. A helical transmembrane segment spans residues 111 to 133 (GFVTIPFLAFTAFVIIFICSLLI).

It belongs to the DsbB family. BdbC subfamily.

It localises to the cell membrane. Its function is as follows. Required for disulfide bond formation in some proteins. This is Probable disulfide formation protein C from Halalkalibacterium halodurans (strain ATCC BAA-125 / DSM 18197 / FERM 7344 / JCM 9153 / C-125) (Bacillus halodurans).